We begin with the raw amino-acid sequence, 351 residues long: Thiamine-phosphate synthase (351 aa).

The tract at residues 1–128 is unknown; sequence MLNSNTKDHE…SKIASEIRYE (128 aa). The thiamine-phosphate synthase stretch occupies residues 129–351; it reads IYTVEIDLLS…MILKELSHEN (223 aa). 4-amino-2-methyl-5-(diphosphooxymethyl)pyrimidine is bound by residues 180–184 and Asn-212; that span reads QHRFK. Mg(2+) contacts are provided by Asp-213 and Asp-232. Ser-251 is a 4-amino-2-methyl-5-(diphosphooxymethyl)pyrimidine binding site. 277-279 is a binding site for 2-[(2R,5Z)-2-carboxy-4-methylthiazol-5(2H)-ylidene]ethyl phosphate; sequence TTT. Residue Lys-280 coordinates 4-amino-2-methyl-5-(diphosphooxymethyl)pyrimidine. Gly-307 is a binding site for 2-[(2R,5Z)-2-carboxy-4-methylthiazol-5(2H)-ylidene]ethyl phosphate.

This sequence belongs to the thiamine-phosphate synthase family. The cofactor is Mg(2+).

It catalyses the reaction 2-[(2R,5Z)-2-carboxy-4-methylthiazol-5(2H)-ylidene]ethyl phosphate + 4-amino-2-methyl-5-(diphosphooxymethyl)pyrimidine + 2 H(+) = thiamine phosphate + CO2 + diphosphate. The enzyme catalyses 2-(2-carboxy-4-methylthiazol-5-yl)ethyl phosphate + 4-amino-2-methyl-5-(diphosphooxymethyl)pyrimidine + 2 H(+) = thiamine phosphate + CO2 + diphosphate. It carries out the reaction 4-methyl-5-(2-phosphooxyethyl)-thiazole + 4-amino-2-methyl-5-(diphosphooxymethyl)pyrimidine + H(+) = thiamine phosphate + diphosphate. Its pathway is cofactor biosynthesis; thiamine diphosphate biosynthesis; thiamine phosphate from 4-amino-2-methyl-5-diphosphomethylpyrimidine and 4-methyl-5-(2-phosphoethyl)-thiazole: step 1/1. Functionally, condenses 4-methyl-5-(beta-hydroxyethyl)thiazole monophosphate (THZ-P) and 2-methyl-4-amino-5-hydroxymethyl pyrimidine pyrophosphate (HMP-PP) to form thiamine monophosphate (TMP). This Prochlorococcus marinus (strain AS9601) protein is Thiamine-phosphate synthase.